Consider the following 638-residue polypeptide: Homeobox protein 10 (638 aa).

Disordered stretches follow at residues Glu-23–Asn-55, Thr-76–Asn-139, and Ile-195–Lys-219. Low complexity-rich tracts occupy residues Thr-24–Asn-55 and Asn-80–Asn-139. The span at Glu-205 to Gly-214 shows a compositional bias: polar residues. Residues Asn-301–Gly-360 constitute a DNA-binding region (homeobox). Disordered regions lie at residues Glu-381 to Asp-431 and Ser-448 to Asn-638. 3 stretches are compositionally biased toward low complexity: residues Ser-388 to Gly-411, Leu-419 to Ser-430, and Asn-462 to Thr-501. Polar residues-rich tracts occupy residues Ser-502–Thr-522 and Ser-545–Gln-573. The span at Asn-575 to Asp-625 shows a compositional bias: low complexity.

It is found in the nucleus. Putative transcription factor. This chain is Homeobox protein 10 (hbx10), found in Dictyostelium discoideum (Social amoeba).